Reading from the N-terminus, the 367-residue chain is MGEVKLFFGPNHPGMHGNFSVHMYVEGDTVVKARPLPGFLHRGFEKLMERRLWYQNLALIPRICVPEPDINELCYALAVEKIAKIDVPERAQWIRMIVLELARIANHLWSFSGIGGPIGLYTGSFWGTADRDRILDIFENLTGARVYHMYIVPGGVRKDLTPKIEKMILETLDYIESRLPDYEKLILKNRIVHTRLKGIAKLDRETALEMGVTGVGLRATGVPYDIRKVDPYLFYDKVDFEVPFSTDGDAFARVYLKFREIFQSIKIVKQALEKMPVGKVNTPISEGSALRFRVPKGQAYVHIESTRGEYGYYMVSDGGEKPYRVVVRGASYPQTFIGVEKYLPGTRIEDVPIWLSTMDVCAPEVDR.

This sequence belongs to the complex I 49 kDa subunit family. As to quaternary structure, NDH-1 is composed of 14 different subunits. Subunits NuoB, C, D, E, F, and G constitute the peripheral sector of the complex.

The protein localises to the cell inner membrane. It carries out the reaction a quinone + NADH + 5 H(+)(in) = a quinol + NAD(+) + 4 H(+)(out). NDH-1 shuttles electrons from NADH, via FMN and iron-sulfur (Fe-S) centers, to quinones in the respiratory chain. The immediate electron acceptor for the enzyme in this species is believed to be ubiquinone. Couples the redox reaction to proton translocation (for every two electrons transferred, four hydrogen ions are translocated across the cytoplasmic membrane), and thus conserves the redox energy in a proton gradient. In Thermosipho melanesiensis (strain DSM 12029 / CIP 104789 / BI429), this protein is NADH-quinone oxidoreductase subunit D.